Here is a 191-residue protein sequence, read N- to C-terminus: dCTP deaminase (191 aa).

Residues 112–117, 136–138, Gln-157, Tyr-173, and Gln-183 contribute to the dCTP site; these read KSTYAR and TLE. The Proton donor/acceptor role is filled by Glu-138.

It belongs to the dCTP deaminase family. As to quaternary structure, homotrimer.

It catalyses the reaction dCTP + H2O + H(+) = dUTP + NH4(+). The protein operates within pyrimidine metabolism; dUMP biosynthesis; dUMP from dCTP (dUTP route): step 1/2. Functionally, catalyzes the deamination of dCTP to dUTP. This Psychrobacter arcticus (strain DSM 17307 / VKM B-2377 / 273-4) protein is dCTP deaminase.